The sequence spans 739 residues: Cellulose synthase catalytic subunit [UDP-forming] (739 aa).

The next 4 helical transmembrane spans lie at 36 to 55 (VLVVASCVLGAMLLLGIISA), 59 to 76 (LYSQCLFAAVCFLAVLVL), 83 to 101 (LAILALVVLSLVASLRYMF), and 116 to 138 (MFFGYGLVAAEFYALIVLIFGYV). The tract at residues 157-250 (EWPTVDVFIP…YIALFDADHV (94 aa)) is catalytic subdomain A. D199 is an active-site residue. Positions 246 and 248 each coordinate substrate. Positions 327–387 (EPLLEIGGVA…NQRIRWARGM (61 aa)) are catalytic subdomain B. D343 is a catalytic residue. Helical transmembrane passes span 417-436 (FFYGLPRLVFLTAPLAYLIF), 440-462 (IFHASALMIVAYVLPHLVHSSLT), 524-546 (PYLVLLAVNLIGLGFGIHQLIWG), and 551-573 (AVTVAINLTWTLYNLIITSAAVA). A PilZ domain is found at 580–677 (QVRSEPRVSA…QSELVRLTFS (98 aa)).

Belongs to the glycosyltransferase 2 family. It depends on Mg(2+) as a cofactor.

Its subcellular location is the cell inner membrane. It catalyses the reaction [(1-&gt;4)-beta-D-glucosyl](n) + UDP-alpha-D-glucose = [(1-&gt;4)-beta-D-glucosyl](n+1) + UDP + H(+). It participates in glycan metabolism; bacterial cellulose biosynthesis. Activated by bis-(3'-5') cyclic diguanylic acid (c-di-GMP). In terms of biological role, catalytic subunit of cellulose synthase. It polymerizes uridine 5'-diphosphate glucose to cellulose, which is produced as an extracellular component responsible for the structural integrity and rigidity of self-supporting mats characteristic of the 'wrinkly spreader' phenotype. This Pseudomonas fluorescens (strain SBW25) protein is Cellulose synthase catalytic subunit [UDP-forming] (bcsA).